The following is a 233-amino-acid chain: H-2 class II histocompatibility antigen, A-S alpha chain (233 aa).

The tract at residues 1 to 88 (EDDIEADHVG…KRSNSTPATN (88 aa)) is alpha-1. The Extracellular segment spans residues 1–195 (EDDIEADHVG…IPAPMSELTE (195 aa)). The interval 89–182 (EAPQATVFPK…GLEEPVLKHW (94 aa)) is alpha-2. The region spanning 91–183 (PQATVFPKSP…LEEPVLKHWE (93 aa)) is the Ig-like C1-type domain. Cys111 and Cys167 are oxidised to a cystine. An N-linked (GlcNAc...) asparagine glycan is attached at Asn122. A connecting peptide region spans residues 183-195 (EPEIPAPMSELTE). A helical transmembrane segment spans residues 196–221 (TVVCALGLSVGLVGIVVGTIFIIQGL). Residues 222 to 233 (RSGGTSRHPGPL) lie on the Cytoplasmic side of the membrane.

Belongs to the MHC class II family.

It is found in the membrane. This chain is H-2 class II histocompatibility antigen, A-S alpha chain (H2-Aa), found in Mus musculus (Mouse).